The sequence spans 481 residues: E3 ubiquitin-protein ligase makorin-1 (481 aa).

C3H1-type zinc fingers lie at residues 55-82 (WTKQ…HDLS), 84-111 (SPYG…HSKP), and 208-235 (ETKK…HGDS). The interval 236-263 (CDMCGLQVLHPVDAAQRSQHIKSCIEAH) is makorin-type Cys-His. The segment at 281-335 (CGICMEVVYEKANPSERRFGILSNCNHTYCLKCIRKWRSAKQFESKIIKSCPECR) adopts an RING-type zinc-finger fold. A C3H1-type 4 zinc finger spans residues 364-393 (AMSNKACRYFDEGRGSCPFGGNCFYKHAYP).

As to quaternary structure, interacts with p53/TP53 and CDKN1A. Interacts with TERT, modulating telomere length homeostasis. In terms of processing, auto-ubiquitinated; which leads to proteasomal degradation. As to expression, highly expressed in embryo, in specific cell types of the central nervous system, in brain with the strongest levels of expression in the mantle layers and in testis. Moderate to low levels in somatic tissues.

The enzyme catalyses S-ubiquitinyl-[E2 ubiquitin-conjugating enzyme]-L-cysteine + [acceptor protein]-L-lysine = [E2 ubiquitin-conjugating enzyme]-L-cysteine + N(6)-ubiquitinyl-[acceptor protein]-L-lysine.. Its pathway is protein modification; protein ubiquitination. Functionally, E3 ubiquitin ligase catalyzing the covalent attachment of ubiquitin moieties onto substrate proteins. These substrates include FILIP1, p53/TP53, CDKN1A and TERT. Keeps cells alive by suppressing p53/TP53 under normal conditions, but stimulates apoptosis by repressing CDKN1A under stress conditions. Acts as a negative regulator of telomerase. Has negative and positive effects on RNA polymerase II-dependent transcription. The chain is E3 ubiquitin-protein ligase makorin-1 (Mkrn1) from Mus musculus (Mouse).